The chain runs to 227 residues: ATP-dependent dethiobiotin synthetase BioD (227 aa).

ATP is bound at residue Asp-13–Tyr-18. Thr-17 provides a ligand contact to Mg(2+). Lys-38 is a catalytic residue. A substrate-binding site is contributed by Ser-42. ATP-binding positions include Asp-55, Glu-116–Gly-119, and Asn-179–Asn-180. Residues Asp-55 and Glu-116 each coordinate Mg(2+).

Belongs to the dethiobiotin synthetase family. In terms of assembly, homodimer. Mg(2+) is required as a cofactor.

The protein resides in the cytoplasm. The catalysed reaction is (7R,8S)-7,8-diammoniononanoate + CO2 + ATP = (4R,5S)-dethiobiotin + ADP + phosphate + 3 H(+). It participates in cofactor biosynthesis; biotin biosynthesis; biotin from 7,8-diaminononanoate: step 1/2. Catalyzes a mechanistically unusual reaction, the ATP-dependent insertion of CO2 between the N7 and N8 nitrogen atoms of 7,8-diaminopelargonic acid (DAPA, also called 7,8-diammoniononanoate) to form a ureido ring. This chain is ATP-dependent dethiobiotin synthetase BioD, found in Clostridium botulinum (strain ATCC 19397 / Type A).